The following is a 337-amino-acid chain: ATP-dependent 6-phosphofructokinase (337 aa).

Position 11 (Gly-11) interacts with ATP. 21 to 25 (RAVVR) contacts ADP. Residues 72–73 (RY) and 102–105 (GDGS) each bind ATP. Mg(2+) is bound at residue Asp-103. 125–127 (TID) contributes to the substrate binding site. Asp-127 serves as the catalytic Proton acceptor. Position 154 (Arg-154) interacts with ADP. Substrate contacts are provided by residues Arg-162 and 169 to 171 (MGR). ADP contacts are provided by residues 185-187 (GAD), Lys-212, and 214-216 (KNH). Substrate-binding positions include Glu-223, Arg-245, and 251-254 (HILR).

This sequence belongs to the phosphofructokinase type A (PFKA) family. ATP-dependent PFK group I subfamily. Prokaryotic clade 'B1' sub-subfamily. As to quaternary structure, homotetramer. The cofactor is Mg(2+).

The protein resides in the cytoplasm. It carries out the reaction beta-D-fructose 6-phosphate + ATP = beta-D-fructose 1,6-bisphosphate + ADP + H(+). It participates in carbohydrate degradation; glycolysis; D-glyceraldehyde 3-phosphate and glycerone phosphate from D-glucose: step 3/4. With respect to regulation, allosterically activated by ADP and other diphosphonucleosides, and allosterically inhibited by phosphoenolpyruvate. In terms of biological role, catalyzes the phosphorylation of D-fructose 6-phosphate to fructose 1,6-bisphosphate by ATP, the first committing step of glycolysis. In Streptococcus pyogenes serotype M4 (strain MGAS10750), this protein is ATP-dependent 6-phosphofructokinase.